Consider the following 417-residue polypeptide: Blood group Rh(D) polypeptide (417 aa).

Transmembrane regions (helical) follow at residues 12 to 32 (CLPLWALTLEAALILLFYFFT), 44 to 64 (LVASYQVGQDLTVMAAIGLGF), 77 to 97 (VAFNLFMLALGVQWAILLDGF), 107 to 127 (VITLFSIRLATMSALSVLISV), 130 to 150 (VLGKVNLAQLVVMVLVEVTAL), 167 to 187 (MNMMHIYVFAAYFGLSVAWCL), 203 to 223 (TIPSLSAMLGALFLWMFWPSF), 238 to 258 (VFNTYYAVAVSVVTAISGSSL), 287 to 307 (LIPSPWLAMVLGLVAGLISVG), 334 to 354 (LLGLLGEIIYIVLLVLDTVGA), and 358 to 378 (MIGFQVLLSIGELSLAIVIAL).

Belongs to the ammonium transporter (TC 2.A.49) family. Rh subfamily. In terms of processing, palmitoylated. In terms of tissue distribution, restricted to tissues or cell lines expressing erythroid characters.

It localises to the cell membrane. Its function is as follows. May be part of an oligomeric complex which is likely to have a transport or channel function in the erythrocyte membrane. This chain is Blood group Rh(D) polypeptide (RHD), found in Homo sapiens (Human).